The primary structure comprises 122 residues: Small ribosomal subunit protein uS13 (122 aa).

The interval 93 to 122 (RLSLPVRGQRTKTNSRTRKGKRKTVAGKKK) is disordered. Basic residues predominate over residues 101–122 (QRTKTNSRTRKGKRKTVAGKKK).

Belongs to the universal ribosomal protein uS13 family. Part of the 30S ribosomal subunit. Forms a loose heterodimer with protein S19. Forms two bridges to the 50S subunit in the 70S ribosome.

Its function is as follows. Located at the top of the head of the 30S subunit, it contacts several helices of the 16S rRNA. In the 70S ribosome it contacts the 23S rRNA (bridge B1a) and protein L5 of the 50S subunit (bridge B1b), connecting the 2 subunits; these bridges are implicated in subunit movement. Contacts the tRNAs in the A and P-sites. The polypeptide is Small ribosomal subunit protein uS13 (Chlamydia pneumoniae (Chlamydophila pneumoniae)).